Here is a 546-residue protein sequence, read N- to C-terminus: Probable protein kinase UbiB (546 aa).

The Protein kinase domain maps to 124–502 (DFDIKPLASA…QARQGQSRYL (379 aa)). Residues 130-138 (LASASIAQV) and Lys153 contribute to the ATP site. Catalysis depends on Asp288, which acts as the Proton acceptor. Transmembrane regions (helical) follow at residues 499-519 (SRYL…LLIS) and 521-541 (VEAD…WIIG).

The protein belongs to the ABC1 family. UbiB subfamily.

It localises to the cell inner membrane. It functions in the pathway cofactor biosynthesis; ubiquinone biosynthesis [regulation]. Its function is as follows. Is probably a protein kinase regulator of UbiI activity which is involved in aerobic coenzyme Q (ubiquinone) biosynthesis. The polypeptide is Probable protein kinase UbiB (Pectobacterium carotovorum subsp. carotovorum (strain PC1)).